The following is a 208-amino-acid chain: Small ribosomal subunit protein uS4 (208 aa).

Residues 98–160 (SRLDNVAYNM…AKSYLRIKSS (63 aa)) enclose the S4 RNA-binding domain.

The protein belongs to the universal ribosomal protein uS4 family. In terms of assembly, part of the 30S ribosomal subunit. Contacts protein S5. The interaction surface between S4 and S5 is involved in control of translational fidelity.

Functionally, one of the primary rRNA binding proteins, it binds directly to 16S rRNA where it nucleates assembly of the body of the 30S subunit. With S5 and S12 plays an important role in translational accuracy. The polypeptide is Small ribosomal subunit protein uS4 (Nitrosomonas eutropha (strain DSM 101675 / C91 / Nm57)).